Here is a 90-residue protein sequence, read N- to C-terminus: Small ribosomal subunit protein uS17 (90 aa).

This sequence belongs to the universal ribosomal protein uS17 family. As to quaternary structure, part of the 30S ribosomal subunit.

In terms of biological role, one of the primary rRNA binding proteins, it binds specifically to the 5'-end of 16S ribosomal RNA. The chain is Small ribosomal subunit protein uS17 from Paraburkholderia phymatum (strain DSM 17167 / CIP 108236 / LMG 21445 / STM815) (Burkholderia phymatum).